Consider the following 865-residue polypeptide: cGMP-specific 3',5'-cyclic phosphodiesterase (865 aa).

The segment covering 69 to 83 has biased composition (low complexity); sequence CSCSSQQSSRADSSA. Residues 69 to 92 form a disordered region; the sequence is CSCSSQQSSRADSSAPGTPTRKIS. Residue serine 92 is modified to Phosphoserine. GAF domains lie at 154–304 and 336–493; these read DVTA…GIVL and SLEV…GLGI. In terms of domain architecture, PDEase spans 526–850; it reads ETKELQSLAA…QKWQALAEQQ (325 aa). The active-site Proton donor is histidine 603. Histidine 607, histidine 643, aspartate 644, and aspartate 754 together coordinate Zn(2+). Residue aspartate 644 participates in Mg(2+) binding. Glutamine 807 contributes to the 3',5'-cyclic GMP binding site.

Belongs to the cyclic nucleotide phosphodiesterase family. Requires Zn(2+) as cofactor. Mg(2+) serves as cofactor. Phosphorylation is regulated by binding of cGMP to the two allosteric sites. Phosphorylation by PRKG1 leads to its activation. Isoform PDE5A1 and isoform PDE5A2 are highly expressed in the cerebellum, hippocampus, retina, lung, heart, spleen, and thoracic artery. Isoform PDE5A1, but not isoform PDE5A2, is also abundantly expressed in the pylorus.

The protein localises to the cytoplasm. It localises to the cytosol. It carries out the reaction 3',5'-cyclic GMP + H2O = GMP + H(+). The protein operates within purine metabolism; 3',5'-cyclic GMP degradation; GMP from 3',5'-cyclic GMP: step 1/1. With respect to regulation, inhibited by zaprinast. In terms of biological role, plays a role in signal transduction by regulating the intracellular concentration of cyclic nucleotides. This phosphodiesterase catalyzes the specific hydrolysis of cGMP to 5'-GMP. Specifically regulates nitric-oxide-generated cGMP. This Canis lupus familiaris (Dog) protein is cGMP-specific 3',5'-cyclic phosphodiesterase (PDE5A).